A 935-amino-acid chain; its full sequence is GPI ethanolamine phosphate transferase 1 (935 aa).

Over 1–5 (MFGRL) the chain is Cytoplasmic. Residues 6–26 (LLLGILFHVVFLKSIFDIYFV) traverse the membrane as a helical segment. The Lumenal portion of the chain corresponds to 27–449 (TPLIHGMKQY…LQRYDWLLLR (423 aa)). Asparagine 86, asparagine 134, asparagine 315, and asparagine 398 each carry an N-linked (GlcNAc...) asparagine glycan. Residues 450-470 (SIVFFGYLSWIGYVICFVFSL) traverse the membrane as a helical segment. Topologically, residues 471–483 (NIEPSSKIVKPVS) are cytoplasmic. Residues 484–503 (VVKRVAFNIPFLLICIFFYI) form a helical membrane-spanning segment. Residues 504-509 (QSSPPF) are Lumenal-facing. The chain crosses the membrane as a helical span at residues 510–530 (YYGYALFPTIFLQLIHSIFPN). Residues 531-547 (TKLGFKNFLTVAKQKHG) are Cytoplasmic-facing. The chain crosses the membrane as a helical span at residues 548–568 (FSLLKILFISLCILCLLQFIV). Topologically, residues 569-576 (YSYFHREG) are lumenal. The chain crosses the membrane as a helical span at residues 577–597 (FSVILMGLAAWPWLLHADYAF). Over 598-600 (SHK) the chain is Cytoplasmic. A helical membrane pass occupies residues 601 to 621 (TISVSWSVLTSLLCFFTILPV). Residues 622 to 626 (NKKES) are Lumenal-facing. Residues 627–647 (LLFIFAGGFAMSVAGVFYILY) traverse the membrane as a helical segment. At 648–663 (RRNQAFQYSSTVTNKQ) the chain is on the cytoplasmic side. A helical transmembrane segment spans residues 664–684 (LVLQVLIIMATVPVTLKIADS). Topologically, residues 685–688 (LQRN) are lumenal. The chain crosses the membrane as a helical span at residues 689–709 (IAIPPILRLVAFGLFITSYII). Over 710–737 (PSHHIRSCKHYFLDRLAILFLTFSPTMC) the chain is Cytoplasmic. A helical membrane pass occupies residues 738-758 (MLSISFEALFYVVLFITLGLW). Residues 759–792 (MELETELQKYTEQLHPEYSRKKDAKFHLSLSHIR) lie on the Lumenal side of the membrane. The helical transmembrane segment at 793-813 (ISLFFYIFINVAFFGTGNVAS) threads the bilayer. Residues 814–835 (LSTFALDSVKRFIPVFNPVTQG) lie on the Cytoplasmic side of the membrane. A helical transmembrane segment spans residues 836–856 (ALLMYTILVPFIALSAAFGIM). Residues 857–865 (NKRLGGIQQ) are Lumenal-facing. The helical transmembrane segment at 866–886 (VTFFLAVGMADIVTINFFYLV) threads the bilayer. At 887-894 (KDEGSWKD) the chain is on the cytoplasmic side. The helical transmembrane segment at 895–915 (IGVSISHFCISNFLILFITAL) threads the bilayer. At 916–935 (EHASAILCKNITYTIHEKVN) the chain is on the lumenal side. Asparagine 925 is a glycosylation site (N-linked (GlcNAc...) asparagine).

Belongs to the PIGG/PIGN/PIGO family. PIGN subfamily.

The protein resides in the endoplasmic reticulum membrane. The protein operates within glycolipid biosynthesis; glycosylphosphatidylinositol-anchor biosynthesis. Its function is as follows. Ethanolamine phosphate transferase involved in glycosylphosphatidylinositol-anchor biosynthesis. Transfers ethanolamine phosphate to the first alpha-1,4-linked mannose of the glycosylphosphatidylinositol precursor of GPI-anchor. The protein is GPI ethanolamine phosphate transferase 1 (its8) of Schizosaccharomyces pombe (strain 972 / ATCC 24843) (Fission yeast).